Reading from the N-terminus, the 146-residue chain is NADH-quinone oxidoreductase subunit A (146 aa).

Transmembrane regions (helical) follow at residues 16–36 (FAIF…GGWF), 68–88 (FYLV…LFAW), and 98–118 (VGFV…VYLV).

It belongs to the complex I subunit 3 family. As to quaternary structure, NDH-1 is composed of 13 different subunits. Subunits NuoA, H, J, K, L, M, N constitute the membrane sector of the complex.

It is found in the cell inner membrane. It carries out the reaction a quinone + NADH + 5 H(+)(in) = a quinol + NAD(+) + 4 H(+)(out). Its function is as follows. NDH-1 shuttles electrons from NADH, via FMN and iron-sulfur (Fe-S) centers, to quinones in the respiratory chain. The immediate electron acceptor for the enzyme in this species is believed to be ubiquinone. Couples the redox reaction to proton translocation (for every two electrons transferred, four hydrogen ions are translocated across the cytoplasmic membrane), and thus conserves the redox energy in a proton gradient. In Enterobacter sp. (strain 638), this protein is NADH-quinone oxidoreductase subunit A.